Reading from the N-terminus, the 288-residue chain is Aquaporin PIP1-5 (288 aa).

Residues 1–36 (MEGKEEDVRLGANRYSERQPIGTAAQGTEEKDYKEP) are disordered. A run of 2 helical transmembrane segments spans residues 57–77 (IAEF…VMGV) and 92–114 (IAWS…SGGH). Positions 116 to 118 (NPA) match the NPA 1 motif. The next 3 helical transmembrane spans lie at 135-155 (LFYM…VKGF), 177-197 (GDGL…VFSA), and 211-231 (ILAP…TIPI). Residues 237 to 239 (NPA) carry the NPA 2 motif. A helical transmembrane segment spans residues 259–279 (IFWVGPFIGAALAAIYHVVII).

Belongs to the MIP/aquaporin (TC 1.A.8) family. PIP (TC 1.A.8.11) subfamily. Highly expressed in roots and at lower levels in anthers and silks.

The protein resides in the cell membrane. Functionally, water channel required to facilitate the transport of water across cell membrane. This Zea mays (Maize) protein is Aquaporin PIP1-5 (PIP1-5).